Reading from the N-terminus, the 232-residue chain is Ribonuclease 3 (232 aa).

Residues 6-135 (QDYLAKTYGI…FIGALYLDQG (130 aa)) form the RNase III domain. Glutamate 48 contacts Mg(2+). Residue aspartate 52 is part of the active site. Mg(2+)-binding residues include aspartate 121 and glutamate 124. Glutamate 124 is a catalytic residue. A DRBM domain is found at 161 to 230 (DAKTSLQEFL…AKHALEKLRM (70 aa)).

This sequence belongs to the ribonuclease III family. As to quaternary structure, homodimer. The cofactor is Mg(2+).

The protein resides in the cytoplasm. The enzyme catalyses Endonucleolytic cleavage to 5'-phosphomonoester.. Functionally, digests double-stranded RNA. Involved in the processing of primary rRNA transcript to yield the immediate precursors to the large and small rRNAs (23S and 16S). Processes some mRNAs, and tRNAs when they are encoded in the rRNA operon. Processes pre-crRNA and tracrRNA of type II CRISPR loci if present in the organism. This is Ribonuclease 3 from Limosilactobacillus fermentum (strain NBRC 3956 / LMG 18251) (Lactobacillus fermentum).